The following is a 202-amino-acid chain: Phospholipase A2 inhibitor gamma subunit A (202 aa).

The first 19 residues, 1–19 (MKSLQIICLLFIFVARGSC), serve as a signal peptide directing secretion. Intrachain disulfides connect cysteine 22–cysteine 47, cysteine 25–cysteine 32, cysteine 40–cysteine 68, cysteine 74–cysteine 95, cysteine 96–cysteine 101, cysteine 119–cysteine 144, cysteine 137–cysteine 166, and cysteine 170–cysteine 192. Asparagine 177 carries N-linked (GlcNAc...) asparagine glycosylation.

Belongs to the CNF-like-inhibitor family. Heterodimer of subunit A and subunit B. N-glycosylated. As to expression, expressed by the liver. Not expressed in esophagus, stomach, pancreas, spleen, gall bladder, small intestine, rectum, kidney, trachea, lung, testis and body fat.

The protein resides in the secreted. Functionally, inhibits the enzymatic activity of all phospholipase A2 (PA2) groups. This Elaphe quadrivirgata (Japanese four-lined ratsnake) protein is Phospholipase A2 inhibitor gamma subunit A.